The following is a 308-amino-acid chain: Urease subunit beta (308 aa).

The 178-residue stretch at 131–308 (GGIDTHIHFI…STNPTIPFTK (178 aa)) folds into the Urease domain. Residues His-136, His-138, Lys-219, His-248, and His-274 each coordinate Ni(2+). Residue Lys-219 is modified to N6-carboxylysine.

The protein belongs to the metallo-dependent hydrolases superfamily. Urease alpha subunit family. In terms of assembly, heterohexamer of 3 UreA (alpha) and 3 UreB (beta) subunits. The cofactor is Ni cation. Post-translationally, carboxylation allows a single lysine to coordinate two nickel ions.

The protein localises to the cytoplasm. It catalyses the reaction urea + 2 H2O + H(+) = hydrogencarbonate + 2 NH4(+). Its pathway is nitrogen metabolism; urea degradation; CO(2) and NH(3) from urea (urease route): step 1/1. The chain is Urease subunit beta (ureB) from Helicobacter mustelae.